The chain runs to 156 residues: Small ribosomal subunit protein uS7 (156 aa).

Belongs to the universal ribosomal protein uS7 family. Part of the 30S ribosomal subunit. Contacts proteins S9 and S11.

One of the primary rRNA binding proteins, it binds directly to 16S rRNA where it nucleates assembly of the head domain of the 30S subunit. Is located at the subunit interface close to the decoding center, probably blocks exit of the E-site tRNA. In Streptococcus gordonii (strain Challis / ATCC 35105 / BCRC 15272 / CH1 / DL1 / V288), this protein is Small ribosomal subunit protein uS7.